The chain runs to 1238 residues: Anion exchange protein 2 (1238 aa).

The disordered stretch occupies residues 1-238; sequence MSGTPRRPAS…YNLQERRRIG (238 aa). Residues 1–704 are Cytoplasmic-facing; sequence MSGTPRRPAS…SDFRDALDPQ (704 aa). Composition is skewed to basic and acidic residues over residues 37 to 49 and 58 to 75; these read DLHR…RFEE and GGEE…EYHR. Composition is skewed to basic residues over residues 76–85 and 94–110; these read QSSHHIHHPL and RRRK…RRRP. The segment covering 120–133 has biased composition (acidic residues); that stretch reads TIEEGEEDEDETSE. S132, S144, S170, and S172 each carry phosphoserine. The span at 141-154 shows a compositional bias: polar residues; that stretch reads TDPSPASTPTSVQF. Residues 205 to 215 show a composition bias toward gly residues; it reads GTAGGDDGGAS. Residue S239 is modified to Phosphoserine. T253 is modified (phosphothreonine). At K270 the chain carries N6-methyllysine. A disordered region spans residues 277-315; the sequence is VPGVRRHLVRKNAKGSSQSSREGREPGPTPRTRPRAPHK. Basic residues predominate over residues 280–289; the sequence is VRRHLVRKNA. Phosphoserine is present on S439. The interval 445–466 is disordered; that stretch reads SLLGHHHTQGAESDPHVTEPLI. Transmembrane regions (helical) follow at residues 705–728, 734–771, 791–813, and 823–844; these read CLAA…GLLG, LIGV…LLVF, VWIG…SFLV, and IFAF…VKIF. A membrane (anion exchange) region spans residues 705–1238; the sequence is CLAAVIFIYF…DEYNEMPMPV (534 aa). Residues 845–897 are Extracellular-facing; that stretch reads QEHPLHGCLASNSSEADGGKNTTWTEAAPTPGHGNTSSAEQAGVERPQGQPNT. N-linked (GlcNAc...) asparagine glycosylation is found at N856, N865, and N879. Residues 858–869 are compositionally biased toward polar residues; sequence SEADGGKNTTWT. Residues 858 to 892 form a disordered region; sequence SEADGGKNTTWTEAAPTPGHGNTSSAEQAGVERPQ. A helical transmembrane segment spans residues 898-915; it reads ALLSLVLMAGTFFIAFFL. At 916-930 the chain is on the cytoplasmic side; the sequence is RKFKNSRFFPGRIRR. The next 5 membrane-spanning stretches (helical) occupy residues 931-951, 985-1007, 1033-1054, 1088-1133, and 1160-1196; these read VIGD…DYSI, PFPV…LIFM, LLLI…LAAA, VTGL…IQFY, and MHLF…TVPL. Residue C1170 is the site of S-palmitoyl cysteine attachment.

Belongs to the anion exchanger (TC 2.A.31) family. Expressed in the cochlea (at protein level).

It is found in the apical cell membrane. The protein localises to the basolateral cell membrane. The catalysed reaction is hydrogencarbonate(in) + chloride(out) = hydrogencarbonate(out) + chloride(in). Functionally, sodium-independent anion exchanger which mediates the electroneutral exchange of chloride for bicarbonate ions across the cell membrane. Plays an important role in osteoclast differentiation and function. Regulates bone resorption and calpain-dependent actin cytoskeleton organization in osteoclasts via anion exchange-dependent control of pH. Essential for intracellular pH regulation in CD8(+) T-cells upon CD3 stimulation, modulating CD8(+) T-cell response. The sequence is that of Anion exchange protein 2 (SLC4A2) from Cavia porcellus (Guinea pig).